A 274-amino-acid chain; its full sequence is 2,3,4,5-tetrahydropyridine-2,6-dicarboxylate N-succinyltransferase (274 aa).

Residues Arg-104 and Asp-141 each coordinate substrate.

The protein belongs to the transferase hexapeptide repeat family. Homotrimer.

It is found in the cytoplasm. It carries out the reaction (S)-2,3,4,5-tetrahydrodipicolinate + succinyl-CoA + H2O = (S)-2-succinylamino-6-oxoheptanedioate + CoA. It functions in the pathway amino-acid biosynthesis; L-lysine biosynthesis via DAP pathway; LL-2,6-diaminopimelate from (S)-tetrahydrodipicolinate (succinylase route): step 1/3. The chain is 2,3,4,5-tetrahydropyridine-2,6-dicarboxylate N-succinyltransferase from Yersinia pestis.